We begin with the raw amino-acid sequence, 322 residues long: Sideroflexin-2 (322 aa).

At M1 the chain carries N-acetylmethionine. 5 consecutive transmembrane segments (helical) span residues 100 to 122 (MIIT…WQWV), 142 to 164 (SVRQ…AVGM), 174 to 192 (LVGR…CVNI), 228 to 250 (VVIS…MERL), and 265 to 287 (PLQV…GLFP).

Belongs to the sideroflexin family.

It is found in the mitochondrion inner membrane. Its subcellular location is the mitochondrion outer membrane. The enzyme catalyses L-serine(in) = L-serine(out). In terms of biological role, mitochondrial amino-acid transporter that mediates transport of serine into mitochondria. Involved in mitochondrial iron homeostasis by regulating heme biosynthesis. This Bos taurus (Bovine) protein is Sideroflexin-2.